A 504-amino-acid polypeptide reads, in one-letter code: ATP synthase subunit alpha (504 aa).

ATP is bound at residue 169 to 176 (GDRQTGKT).

The protein belongs to the ATPase alpha/beta chains family. In terms of assembly, F-type ATPases have 2 components, CF(1) - the catalytic core - and CF(0) - the membrane proton channel. CF(1) has five subunits: alpha(3), beta(3), gamma(1), delta(1), epsilon(1). CF(0) has three main subunits: a(1), b(2) and c(9-12). The alpha and beta chains form an alternating ring which encloses part of the gamma chain. CF(1) is attached to CF(0) by a central stalk formed by the gamma and epsilon chains, while a peripheral stalk is formed by the delta and b chains.

It localises to the cell membrane. It carries out the reaction ATP + H2O + 4 H(+)(in) = ADP + phosphate + 5 H(+)(out). Its function is as follows. Produces ATP from ADP in the presence of a proton gradient across the membrane. The alpha chain is a regulatory subunit. The chain is ATP synthase subunit alpha from Clostridium botulinum (strain Langeland / NCTC 10281 / Type F).